The sequence spans 394 residues: THAP domain-containing protein 5 (394 aa).

Residues 1 to 84 form a THAP-type zinc finger; the sequence is MPRYCAAICC…LKQTAIPTIF (84 aa). A disordered region spans residues 86-109; it reads LPEDNQEKDPSKKKSQKKKLKSEK. Residues 320 to 323 carry the HCFC1-binding motif (HBM) motif; that stretch reads EHSY. Positions 347 to 381 form a coiled coil; it reads LELQEQQTLGRLKSLEALIRQLKQENWLSEENVKI.

As to quaternary structure, interacts with HTRA2; under apoptotic conditions. Interacts with ABRAXAS2. In terms of processing, cleaved by HTRA2 during apoptosis.

The protein localises to the nucleus. Its function is as follows. Has sequence-specific DNA-binding activity and can function as transcriptional repressor (in vitro). May be a regulator of cell cycle: THAP5 overexpression in human cell lines causes cell cycle arrest at G2/M phase. The polypeptide is THAP domain-containing protein 5 (THAP5) (Bos taurus (Bovine)).